A 567-amino-acid polypeptide reads, in one-letter code: Cytochrome P450 monooxygenase 69 (567 aa).

Residues 7–24 (ELAALTVVLLATGVLFYA) form a helical membrane-spanning segment. N-linked (GlcNAc...) asparagine glycosylation is found at Asn25, Asn81, Asn223, and Asn279. Residue Cys475 participates in heme binding.

Belongs to the cytochrome P450 family. It depends on heme as a cofactor.

It is found in the membrane. Its pathway is secondary metabolite biosynthesis. Its function is as follows. Cytochrome P450 monooxygenase that is able to use 4-ethoxybenzoic acid as a substrate for oxidation. The protein is Cytochrome P450 monooxygenase 69 of Postia placenta (strain ATCC 44394 / Madison 698-R) (Brown rot fungus).